We begin with the raw amino-acid sequence, 324 residues long: Methyltransferase pytC (324 aa).

A disordered region spans residues 1–28 (MTVRTAAEPPNRIEVDMDAPSLDTDSSC).

The protein belongs to the methyltransferase superfamily. LaeA methyltransferase family.

It functions in the pathway secondary metabolite biosynthesis. In terms of biological role, methyltransferase; part of the gene cluster that mediates the biosynthesis of pyranterreones, a family of antioxidative compounds. The first step of pyranonigrins biosynthesis is performed by the hybrid PKS-NRPS synthetase pytA that condenses 4 malonyl-CoA units ato the acetyl starter unit by the modular PKS of pytA. The acyl chain is then connected to an L-serine through the amide bond by the modular NRPS of pytA. A tetramic acid is formed and released from the PKS-NRPS pytA to give pyranterreone 5 with the help of the thioesterase pytI. Pyranterreone 5 could be methylated by pytC to afford pyranterreone 6. Both pyranterreones 5 and 6 are subsequently oxidized by the FAD-linked oxidoreductase pytB and the cytochrome P450 monooxygenase pytD to form the fused gamma-pyrone core, resulting in pyranterreones 7 and 11, respectively. The hydroxy group at C-8 of pyranterreones 7 and 11 are dehydrated by the aspartyl protease pytH to form a delta-7 double bond to give pyranterreones 3 and 1, 2 accordingly. The exo-methylene of pyranterreone 3 could be reduced into a pendant methyl by reductase pytE to provide pyranterreone 4, also known as cordylactam. Pyranterreone 4 can be reconverted to pyranterreone 3 through pytB-catalyzed dehydrogenation or further oxidized to pyranterreones 9 and 10. This is Methyltransferase pytC from Aspergillus terreus.